The sequence spans 275 residues: Phosphonoacetaldehyde hydrolase (275 aa).

The active-site Nucleophile is the D15. Residues D15 and A17 each contribute to the Mg(2+) site. The active-site Schiff-base intermediate with substrate is the K56. Residue D189 coordinates Mg(2+).

This sequence belongs to the HAD-like hydrolase superfamily. PhnX family. As to quaternary structure, homodimer. It depends on Mg(2+) as a cofactor.

It catalyses the reaction phosphonoacetaldehyde + H2O = acetaldehyde + phosphate + H(+). Its function is as follows. Involved in phosphonate degradation. The polypeptide is Phosphonoacetaldehyde hydrolase (Pseudomonas aeruginosa (strain UCBPP-PA14)).